The following is a 475-amino-acid chain: Integrator complex subunit 15 (475 aa).

The interval 402–444 (YPHIHPGRPSPLSPHSPHQSTLSSPHSPHTVLTAHPTHPALAP) is disordered. Residues 416 to 430 (HSPHQSTLSSPHSPH) are compositionally biased toward low complexity.

This sequence belongs to the Integrator subunit 15 family. In terms of assembly, component of the Integrator complex, composed of core subunits INTS1, INTS2, INTS3, INTS4, INTS5, INTS6, INTS7, INTS8, INTS9/RC74, INTS10, INTS11/CPSF3L, INTS12, INTS13, INTS14 and INTS15. The core complex associates with protein phosphatase 2A subunits PPP2CA and PPP2R1A, to form the Integrator-PP2A (INTAC) complex. INTS15 is part of the tail subcomplex, composed of INTS10, INTS13, INTS14 and INTS15.

It is found in the nucleus. It localises to the chromosome. Functionally, component of the integrator complex, a multiprotein complex that terminates RNA polymerase II (Pol II) transcription in the promoter-proximal region of genes. The integrator complex provides a quality checkpoint during transcription elongation by driving premature transcription termination of transcripts that are unfavorably configured for transcriptional elongation: the complex terminates transcription by (1) catalyzing dephosphorylation of the C-terminal domain (CTD) of Pol II subunit POLR2A/RPB1 and SUPT5H/SPT5, (2) degrading the exiting nascent RNA transcript via endonuclease activity and (3) promoting the release of Pol II from bound DNA. The integrator complex is also involved in terminating the synthesis of non-coding Pol II transcripts, such as enhancer RNAs (eRNAs), small nuclear RNAs (snRNAs), telomerase RNAs and long non-coding RNAs (lncRNAs). INTS15 is part of the integrator tail module that acts as a platform for the recruitment of transcription factors at promoters. Within the integrator complex, INTS15 is required to bridge different integrator modules. The polypeptide is Integrator complex subunit 15 (ints15) (Danio rerio (Zebrafish)).